We begin with the raw amino-acid sequence, 55 residues long: ATP synthase F(0) complex subunit 8 (55 aa).

The helical transmembrane segment at 7-24 (APWFSIMIMTWLTLALLI) threads the bilayer. The tract at residues 34-55 (TNPPSSKPSLTTKPTPWAWPWT) is disordered.

The protein belongs to the ATPase protein 8 family. As to quaternary structure, component of the ATP synthase complex composed at least of ATP5F1A/subunit alpha, ATP5F1B/subunit beta, ATP5MC1/subunit c (homooctomer), MT-ATP6/subunit a, MT-ATP8/subunit 8, ATP5ME/subunit e, ATP5MF/subunit f, ATP5MG/subunit g, ATP5MK/subunit k, ATP5MJ/subunit j, ATP5F1C/subunit gamma, ATP5F1D/subunit delta, ATP5F1E/subunit epsilon, ATP5PF/subunit F6, ATP5PB/subunit b, ATP5PD/subunit d, ATP5PO/subunit OSCP. ATP synthase complex consists of a soluble F(1) head domain (subunits alpha(3) and beta(3)) - the catalytic core - and a membrane F(0) domain - the membrane proton channel (subunits c, a, 8, e, f, g, k and j). These two domains are linked by a central stalk (subunits gamma, delta, and epsilon) rotating inside the F1 region and a stationary peripheral stalk (subunits F6, b, d, and OSCP).

Its subcellular location is the mitochondrion membrane. Functionally, subunit 8, of the mitochondrial membrane ATP synthase complex (F(1)F(0) ATP synthase or Complex V) that produces ATP from ADP in the presence of a proton gradient across the membrane which is generated by electron transport complexes of the respiratory chain. ATP synthase complex consist of a soluble F(1) head domain - the catalytic core - and a membrane F(1) domain - the membrane proton channel. These two domains are linked by a central stalk rotating inside the F(1) region and a stationary peripheral stalk. During catalysis, ATP synthesis in the catalytic domain of F(1) is coupled via a rotary mechanism of the central stalk subunits to proton translocation. In vivo, can only synthesize ATP although its ATP hydrolase activity can be activated artificially in vitro. Part of the complex F(0) domain. The polypeptide is ATP synthase F(0) complex subunit 8 (Aythya americana (Redhead)).